The sequence spans 177 residues: Alkyl hydroperoxide reductase AhpD (177 aa).

C130 acts as the Proton donor in catalysis. C130 and C133 form a disulfide bridge. Catalysis depends on C133, which acts as the Cysteine sulfenic acid (-SOH) intermediate.

Belongs to the AhpD family. In terms of assembly, homotrimer.

The enzyme catalyses N(6)-[(R)-dihydrolipoyl]-L-lysyl-[lipoyl-carrier protein] + a hydroperoxide = N(6)-[(R)-lipoyl]-L-lysyl-[lipoyl-carrier protein] + an alcohol + H2O. Antioxidant protein with alkyl hydroperoxidase activity. Required for the reduction of the AhpC active site cysteine residues and for the regeneration of the AhpC enzyme activity. The sequence is that of Alkyl hydroperoxide reductase AhpD from Mycobacterium bovis (strain ATCC BAA-935 / AF2122/97).